A 473-amino-acid chain; its full sequence is MSFKVAIVGRPNVGKSTLFNRLVGKKLALVDDTPGVTRDRREGEARLGDLSFTIIDTAGLEEAATGTLEARMRIGTERAIADADLCLLLIDARAGVTPLDKSFSQILRKSPTPVILAANKCEGGAGKAGRMEAYELGLGAPLPLSAEHGEGLGDLYDALAQFAKGLEADDAGQAVEDALAEEQDADAGFDPDAPYEPDLEAPLRVAIIGRPNVGKSTLVNQLLGEDRMLTGPEAGITRDSIGIEWEWRGRRVKLWDTAGMRRRARVTEKLEKLSVADTLRAVRFAEVVVILLDATQPFERQDLHIADLVEQEGRGLLIVVNKWDMVAEPQEVLRVLKEELERLLPQIRGVPIVTLSALTGRGTDKLMPAIERVHTFWNARVPTARLNRWMQEAVSRHQPPAAHGRPVNLKYISQVKSRPPTFAVFSSRADDVPTSYRRYLVNGLRETFDLPGVPIRLFMRKTHNPYADRKKRS.

EngA-type G domains lie at 3-167 (FKVA…KGLE) and 203-378 (LRVA…TFWN). GTP contacts are provided by residues 9-16 (GRPNVGKS), 56-60 (DTAGL), 119-122 (NKCE), 209-216 (GRPNVGKS), 256-260 (DTAGM), and 321-324 (NKWD). One can recognise a KH-like domain in the interval 379–463 (ARVPTARLNR…PIRLFMRKTH (85 aa)).

This sequence belongs to the TRAFAC class TrmE-Era-EngA-EngB-Septin-like GTPase superfamily. EngA (Der) GTPase family. In terms of assembly, associates with the 50S ribosomal subunit.

In terms of biological role, GTPase that plays an essential role in the late steps of ribosome biogenesis. The protein is GTPase Der of Parvibaculum lavamentivorans (strain DS-1 / DSM 13023 / NCIMB 13966).